The following is an 87-amino-acid chain: Sec-independent protein translocase protein TatA (87 aa).

The helical transmembrane segment at 1–21 (MGSFSIWHWLIVLLIVVMVFG) threads the bilayer. Residues 40-87 (KDGMKDGSTPEGTPASTTAATPPAGQVTNQQAHAADPGTIDVEAKHKG) are disordered. Residues 46-64 (GSTPEGTPASTTAATPPAG) show a composition bias toward low complexity.

Belongs to the TatA/E family. As to quaternary structure, the Tat system comprises two distinct complexes: a TatABC complex, containing multiple copies of TatA, TatB and TatC subunits, and a separate TatA complex, containing only TatA subunits. Substrates initially bind to the TatABC complex, which probably triggers association of the separate TatA complex to form the active translocon.

It localises to the cell inner membrane. Part of the twin-arginine translocation (Tat) system that transports large folded proteins containing a characteristic twin-arginine motif in their signal peptide across membranes. TatA could form the protein-conducting channel of the Tat system. This is Sec-independent protein translocase protein TatA from Paracidovorax citrulli (strain AAC00-1) (Acidovorax citrulli).